A 629-amino-acid polypeptide reads, in one-letter code: tRNA uridine 5-carboxymethylaminomethyl modification enzyme MnmG (629 aa).

FAD is bound by residues 13–18 (GGGHAG), Val125, and Ser180. Residue 273-287 (GPRYCPSIEDKVMRF) participates in NAD(+) binding. Residue Gln370 coordinates FAD.

The protein belongs to the MnmG family. Homodimer. Heterotetramer of two MnmE and two MnmG subunits. FAD is required as a cofactor.

Its subcellular location is the cytoplasm. In terms of biological role, NAD-binding protein involved in the addition of a carboxymethylaminomethyl (cmnm) group at the wobble position (U34) of certain tRNAs, forming tRNA-cmnm(5)s(2)U34. This is tRNA uridine 5-carboxymethylaminomethyl modification enzyme MnmG from Aliivibrio fischeri (strain ATCC 700601 / ES114) (Vibrio fischeri).